A 752-amino-acid polypeptide reads, in one-letter code: Photosystem I P700 chlorophyll a apoprotein A1 (752 aa).

The next 8 membrane-spanning stretches (helical) occupy residues 73–96 (IFSA…FHGA), 159–182 (LYVT…FHYH), 198–222 (LNHH…HVSA), 294–312 (IAHH…GHQY), 349–372 (WHAQ…HHMY), 388–414 (LCIF…IFMV), 436–458 (AIIS…LYIH), and 533–551 (FLIH…LILL). 2 residues coordinate [4Fe-4S] cluster: C575 and C584. 2 helical membrane-spanning segments follow: residues 591–612 (HVFL…HFSW) and 666–688 (LSAY…MFLF). H677 contributes to the chlorophyll a' binding site. The chlorophyll a site is built by M685 and Y693. W694 is a binding site for phylloquinone. A helical transmembrane segment spans residues 726–746 (AVGVAHYLLGGIATTWAFFHA).

The protein belongs to the PsaA/PsaB family. As to quaternary structure, the PsaA/B heterodimer binds the P700 chlorophyll special pair and subsequent electron acceptors. PSI consists of a core antenna complex that captures photons, and an electron transfer chain that converts photonic excitation into a charge separation. The cyanobacterial PSI reaction center is composed of one copy each of PsaA,B,C,D,E,F,I,J,K,L,M and X, and forms trimeric complexes. It depends on PSI electron transfer chain: 5 chlorophyll a, 1 chlorophyll a', 2 phylloquinones and 3 4Fe-4S clusters. PSI core antenna: 90 chlorophyll a, 22 carotenoids, 3 phospholipids and 1 galactolipid. P700 is a chlorophyll a/chlorophyll a' dimer, A0 is one or more chlorophyll a, A1 is one or both phylloquinones and FX is a shared 4Fe-4S iron-sulfur center. as a cofactor.

It is found in the cellular thylakoid membrane. It catalyses the reaction reduced [plastocyanin] + hnu + oxidized [2Fe-2S]-[ferredoxin] = oxidized [plastocyanin] + reduced [2Fe-2S]-[ferredoxin]. Its function is as follows. PsaA and PsaB bind P700, the primary electron donor of photosystem I (PSI), as well as the electron acceptors A0, A1 and FX. PSI is a plastocyanin/cytochrome c6-ferredoxin oxidoreductase, converting photonic excitation into a charge separation, which transfers an electron from the donor P700 chlorophyll pair to the spectroscopically characterized acceptors A0, A1, FX, FA and FB in turn. Oxidized P700 is reduced on the lumenal side of the thylakoid membrane by plastocyanin or cytochrome c6. The protein is Photosystem I P700 chlorophyll a apoprotein A1 of Nostoc punctiforme (strain ATCC 29133 / PCC 73102).